The chain runs to 398 residues: Cytochrome b (398 aa).

The chain crosses the membrane as a helical span at residues 45 to 65 (LGSIAGIALVIQIITGVILAM). Positions 95 and 109 each coordinate heme b. The next 8 membrane-spanning stretches (helical) occupy residues 97–117 (VGAS…LYYG), 129–149 (IGII…VLPW), 164–184 (FSAI…GFSV), 192–212 (FFSL…LHLL), 245–265 (FVGF…EPNY), 304–324 (LAGV…PWLD), 335–355 (PIYR…GYLG), and 364–384 (IIIS…VLPL). Heme b is bound by residues His196 and His210.

This sequence belongs to the cytochrome b family. The main subunits of complex b-c1 are: cytochrome b, cytochrome c1 and the Rieske protein. The cofactor is heme b.

It localises to the cell membrane. Functionally, component of the ubiquinol-cytochrome c reductase complex (complex III or cytochrome b-c1 complex), which is a respiratory chain that generates an electrochemical potential coupled to ATP synthesis. This Rickettsia typhi (strain ATCC VR-144 / Wilmington) protein is Cytochrome b (petB).